Here is a 337-residue protein sequence, read N- to C-terminus: Phenylalanine--tRNA ligase alpha subunit (337 aa).

Glutamate 252 is a binding site for Mg(2+).

This sequence belongs to the class-II aminoacyl-tRNA synthetase family. Phe-tRNA synthetase alpha subunit type 1 subfamily. Tetramer of two alpha and two beta subunits. The cofactor is Mg(2+).

It localises to the cytoplasm. It carries out the reaction tRNA(Phe) + L-phenylalanine + ATP = L-phenylalanyl-tRNA(Phe) + AMP + diphosphate + H(+). In Saccharophagus degradans (strain 2-40 / ATCC 43961 / DSM 17024), this protein is Phenylalanine--tRNA ligase alpha subunit.